The sequence spans 743 residues: Catalase-peroxidase (743 aa).

A compositionally biased stretch (polar residues) spans 1 to 15 (MSSDSRPPQPDTSTQ). Positions 1–40 (MSSDSRPPQPDTSTQSNSESESPAISSPTPQDHAPMTNRD) are disordered. Low complexity predominate over residues 16–28 (SNSESESPAISSP). Positions 110-233 (WHAAGTYRIQ…YGATTMGLIY (124 aa)) form a cross-link, tryptophyl-tyrosyl-methioninium (Trp-Tyr) (with M-259). Catalysis depends on His111, which acts as the Proton acceptor. The tryptophyl-tyrosyl-methioninium (Tyr-Met) (with W-110) cross-link spans 233–259 (YVNPEGPEGKPDPVAAAHDIRETFARM). His274 provides a ligand contact to heme b. Residues 490–511 (DKRGGANGGRLRLEPQKSWESN) are disordered.

Belongs to the peroxidase family. Peroxidase/catalase subfamily. Homodimer or homotetramer. Heme b serves as cofactor. Post-translationally, formation of the three residue Trp-Tyr-Met cross-link is important for the catalase, but not the peroxidase activity of the enzyme.

It catalyses the reaction H2O2 + AH2 = A + 2 H2O. The catalysed reaction is 2 H2O2 = O2 + 2 H2O. In terms of biological role, bifunctional enzyme with both catalase and broad-spectrum peroxidase activity. This is Catalase-peroxidase from Mycobacterium marinum (strain ATCC BAA-535 / M).